The sequence spans 118 residues: Ribonuclease P protein component (118 aa).

The protein belongs to the RnpA family. Consists of a catalytic RNA component (M1 or rnpB) and a protein subunit.

It catalyses the reaction Endonucleolytic cleavage of RNA, removing 5'-extranucleotides from tRNA precursor.. Its function is as follows. RNaseP catalyzes the removal of the 5'-leader sequence from pre-tRNA to produce the mature 5'-terminus. It can also cleave other RNA substrates such as 4.5S RNA. The protein component plays an auxiliary but essential role in vivo by binding to the 5'-leader sequence and broadening the substrate specificity of the ribozyme. This Shewanella baltica (strain OS155 / ATCC BAA-1091) protein is Ribonuclease P protein component.